We begin with the raw amino-acid sequence, 122 residues long: Large ribosomal subunit protein uL14 (122 aa).

This sequence belongs to the universal ribosomal protein uL14 family. Part of the 50S ribosomal subunit. Forms a cluster with proteins L3 and L19. In the 70S ribosome, L14 and L19 interact and together make contacts with the 16S rRNA in bridges B5 and B8.

Functionally, binds to 23S rRNA. Forms part of two intersubunit bridges in the 70S ribosome. The sequence is that of Large ribosomal subunit protein uL14 from Mycoplasmopsis pulmonis (strain UAB CTIP) (Mycoplasma pulmonis).